We begin with the raw amino-acid sequence, 178 residues long: Crossover junction endodeoxyribonuclease RuvC (178 aa).

Active-site residues include D8, E72, and D144. 3 residues coordinate Mg(2+): D8, E72, and D144.

Belongs to the RuvC family. In terms of assembly, homodimer which binds Holliday junction (HJ) DNA. The HJ becomes 2-fold symmetrical on binding to RuvC with unstacked arms; it has a different conformation from HJ DNA in complex with RuvA. In the full resolvosome a probable DNA-RuvA(4)-RuvB(12)-RuvC(2) complex forms which resolves the HJ. Mg(2+) serves as cofactor.

It localises to the cytoplasm. It catalyses the reaction Endonucleolytic cleavage at a junction such as a reciprocal single-stranded crossover between two homologous DNA duplexes (Holliday junction).. Functionally, the RuvA-RuvB-RuvC complex processes Holliday junction (HJ) DNA during genetic recombination and DNA repair. Endonuclease that resolves HJ intermediates. Cleaves cruciform DNA by making single-stranded nicks across the HJ at symmetrical positions within the homologous arms, yielding a 5'-phosphate and a 3'-hydroxyl group; requires a central core of homology in the junction. The consensus cleavage sequence is 5'-(A/T)TT(C/G)-3'. Cleavage occurs on the 3'-side of the TT dinucleotide at the point of strand exchange. HJ branch migration catalyzed by RuvA-RuvB allows RuvC to scan DNA until it finds its consensus sequence, where it cleaves and resolves the cruciform DNA. The chain is Crossover junction endodeoxyribonuclease RuvC from Idiomarina loihiensis (strain ATCC BAA-735 / DSM 15497 / L2-TR).